The chain runs to 292 residues: Geranyl diphosphate 2-C-methyltransferase (292 aa).

This sequence belongs to the geranyl diphosphate 2-C-methyltransferase family. Requires Mg(2+) as cofactor.

It catalyses the reaction (2E)-geranyl diphosphate + S-adenosyl-L-methionine = (E)-2-methylgeranyl diphosphate + S-adenosyl-L-homocysteine + H(+). Catalyzes the SAM-dependent methylation of geranyl diphosphate (GPP) to yield (E)-2-methylgeranyl diphosphate (2-MeGPP). This is Geranyl diphosphate 2-C-methyltransferase from Streptomyces coelicolor (strain ATCC BAA-471 / A3(2) / M145).